Consider the following 201-residue polypeptide: Large ribosomal subunit protein bL25 (201 aa).

It belongs to the bacterial ribosomal protein bL25 family. CTC subfamily. Part of the 50S ribosomal subunit; part of the 5S rRNA/L5/L18/L25 subcomplex. Contacts the 5S rRNA. Binds to the 5S rRNA independently of L5 and L18.

Its function is as follows. This is one of the proteins that binds to the 5S RNA in the ribosome where it forms part of the central protuberance. The protein is Large ribosomal subunit protein bL25 of Aromatoleum aromaticum (strain DSM 19018 / LMG 30748 / EbN1) (Azoarcus sp. (strain EbN1)).